The sequence spans 342 residues: Phenylalanine--tRNA ligase alpha subunit (342 aa).

Glu255 lines the Mg(2+) pocket.

It belongs to the class-II aminoacyl-tRNA synthetase family. Phe-tRNA synthetase alpha subunit type 1 subfamily. In terms of assembly, tetramer of two alpha and two beta subunits. The cofactor is Mg(2+).

The protein localises to the cytoplasm. The enzyme catalyses tRNA(Phe) + L-phenylalanine + ATP = L-phenylalanyl-tRNA(Phe) + AMP + diphosphate + H(+). The sequence is that of Phenylalanine--tRNA ligase alpha subunit from Pelodictyon phaeoclathratiforme (strain DSM 5477 / BU-1).